We begin with the raw amino-acid sequence, 522 residues long: Serine/threonine-protein kinase pak-2 (522 aa).

One can recognise a CRIB domain in the interval 16–29 (ISTPSNFEHRIHAG). A compositionally biased stretch (polar residues) spans 183-204 (TTTPQLQPKSPSTPQAMRQQPK). The tract at residues 183 to 208 (TTTPQLQPKSPSTPQAMRQQPKCTEG) is disordered. The Protein kinase domain maps to 231 to 482 (LTDYKQIGEG…AKDLLRHPFF (252 aa)). ATP contacts are provided by residues 237-245 (IGEGSTGVV) and Lys-260. Asp-350 (proton acceptor) is an active-site residue.

Belongs to the protein kinase superfamily. STE Ser/Thr protein kinase family. STE20 subfamily. It depends on Mg(2+) as a cofactor. Mn(2+) serves as cofactor. Expressed in pharynx, vulva and spermatheca. Unlike other p21-activated kinases, expression is not detected in neurons.

It catalyses the reaction L-seryl-[protein] + ATP = O-phospho-L-seryl-[protein] + ADP + H(+). It carries out the reaction L-threonyl-[protein] + ATP = O-phospho-L-threonyl-[protein] + ADP + H(+). In terms of biological role, serine/threonine-protein kinase which plays a redundant role with pak-1 in embryogenesis but, in contrast to pak-1, is not involved in commissural axon guidance of ventral cord motoneurons or in distal tip cell (DTC) migration. In Caenorhabditis elegans, this protein is Serine/threonine-protein kinase pak-2.